A 541-amino-acid polypeptide reads, in one-letter code: Protein wntless homolog (541 aa).

Residues 1-15 are Cytoplasmic-facing; it reads MAGAIIENMSTKKLC. The chain crosses the membrane as a helical span at residues 16–36; the sequence is IVGGILLVFQIVAFLVGGLIA. Topologically, residues 37–232 are lumenal; the sequence is PAPTTAVSYV…GIHQNGGFTK (196 aa). The interval 101-202 is interaction with Wnt proteins; that stretch reads MEMSPWFQFM…KYYLLNIRLP (102 aa). Residues 233-253 traverse the membrane as a helical segment; the sequence is VWFAMKTFLTPSIFIIMVWYW. Topologically, residues 254–268 are cytoplasmic; the sequence is RRITMMSRPPVLLEK. A helical membrane pass occupies residues 269-289; sequence VIFALGISMTFINIPVEWFSI. Residues 290–303 lie on the Lumenal side of the membrane; the sequence is GFDWTWMLLFGDIR. Residues 304 to 324 traverse the membrane as a helical segment; sequence QGIFYAMLLSFWIIFCGEHMM. The Cytoplasmic segment spans residues 325 to 331; sequence DQHERNH. Residues 332-352 form a helical membrane-spanning segment; the sequence is IAGYWKQVGPIAVGSFCLFIF. Residues 353–380 are Lumenal-facing; the sequence is DMCERGVQLTNPFYSIWTTDVGTELAMA. The helical transmembrane segment at 381–401 threads the bilayer; sequence FIIVAGICLCLYFLFLCFMVF. Topologically, residues 402–431 are cytoplasmic; it reads QVFRNISGKQSSLPAMSKVRRLHYEGLIFR. Residues 432-452 form a helical membrane-spanning segment; that stretch reads FKFLMLITLACAAMTVIFFIV. Residues 453 to 471 are Lumenal-facing; sequence SQVTEGHWKWGGVTVQVSS. A helical membrane pass occupies residues 472–492; that stretch reads AFFTGIYGMWNLYVFALMFLY. The Cytoplasmic portion of the chain corresponds to 493–541; that stretch reads APSHKNYGEDQSNGDLGVHSGEELQLTTTITHVDGPTEIYKLTRKEAQE.

The protein belongs to the wntless family. Interacts with WNT3A. Interacts with WNT1, WNT3 and WNT5A. Post-translationally, N-glycosylated. Expressed in the brain, skeletal muscle, heart muscle, lung, gut, liver, and kidney (at protein level). In the brain, expressed in the cortex, striatum, ventral tegmentum, nucleus accumbens and to a lesser extent in the Purkinjie cells in the cerebellum. Expressed in eye iridocorneal angle.

The protein resides in the golgi apparatus membrane. It localises to the cytoplasmic vesicle membrane. It is found in the cell membrane. Its subcellular location is the endoplasmic reticulum membrane. The protein localises to the early endosome membrane. Its function is as follows. Regulates Wnt proteins sorting and secretion in a feedback regulatory mechanism. This reciprocal interaction plays a key role in the regulation of expression, subcellular location, binding and organelle-specific association of Wnt proteins. Also plays an important role in establishment of the anterior-posterior body axis formation during development. This is Protein wntless homolog (Wls) from Rattus norvegicus (Rat).